The following is a 286-amino-acid chain: MSWDDEDFDIPSNSKQAAASWEEEGNDEPLLDSWDIDEEEVARKKKEEEAKKKAEKEALKKKQEESKAKKLSKNKGQRALLDIDLVDENTRQELLKKAELDADLNNAADLFGGLGVAGEGGMDINEHPRERAAKAAAAAAAASGPTPARLTKDTPIDTHPLFQPTDRQEYEKLRKALAPVLTNLAEDSLMNYSSGLAIDLIRDLAQPLSIESIRKVVSTLNVISKEKEKAERQARLKKAGGTATGGAGKKKAKPAVKTNVNTSFKQDVFDDIDQSKYDEFEEDDFM.

Disordered regions lie at residues 1–35 (MSWD…DSWD), 141–162 (AASG…HPLF), and 229–258 (KAER…AVKT). A compositionally biased stretch (acidic residues) spans 21–35 (WEEEGNDEPLLDSWD). Residues 35 to 75 (DIDEEEVARKKKEEEAKKKAEKEALKKKQEESKAKKLSKNK) adopt a coiled-coil conformation.

It belongs to the eIF-3 subunit J family. Component of the eukaryotic translation initiation factor 3 (eIF-3) complex.

The protein localises to the cytoplasm. Functionally, component of the eukaryotic translation initiation factor 3 (eIF-3) complex, which is involved in protein synthesis of a specialized repertoire of mRNAs and, together with other initiation factors, stimulates binding of mRNA and methionyl-tRNAi to the 40S ribosome. The eIF-3 complex specifically targets and initiates translation of a subset of mRNAs involved in cell proliferation. This chain is Eukaryotic translation initiation factor 3 subunit J, found in Debaryomyces hansenii (strain ATCC 36239 / CBS 767 / BCRC 21394 / JCM 1990 / NBRC 0083 / IGC 2968) (Yeast).